The primary structure comprises 264 residues: SPRY domain-containing SOCS box protein 2 (264 aa).

A compositionally biased stretch (polar residues) spans 1-18 (MGQTALARGSSSTPSSHA). Positions 1–53 (MGQTALARGSSSTPSSHALYSDLSPPEGLEELLSAPPPDLGAQRHHGWNPKDC) are disordered. The span at 21 to 34 (SDLSPPEGLEELLS) shows a compositional bias: low complexity. Positions 26–221 (PEGLEELLSA…VRIRYLGERR (196 aa)) constitute a B30.2/SPRY domain. Residues 222–264 (AEEPQSLLHLSRLCVRHALGDTRLGQISSLPLPPAMKRYLLYK) form the SOCS box domain.

Belongs to the SPSB family. In terms of assembly, component of the probable ECS(SPSB2) E3 ubiquitin-protein ligase complex which contains CUL5, RNF7/RBX2, Elongin BC complex and SPSB2. Interacts with CUL5, RNF7, ELOB and ELOC. Interacts with MET. Interacts (via B30.2/SPRY domain) with PAWR; this interaction occurs in association with the Elongin BC complex. Interacts with NOS2.

The protein resides in the cytoplasm. The protein localises to the cytosol. It functions in the pathway protein modification; protein ubiquitination. In terms of biological role, substrate recognition component of a SCF-like ECS (Elongin BC-CUL2/5-SOCS-box protein) E3 ubiquitin-protein ligase complex which mediates the ubiquitination and subsequent proteasomal degradation of target proteins. Negatively regulates nitric oxide (NO) production and limits cellular toxicity in activated macrophages by mediating the ubiquitination and proteasomal degradation of NOS2. Acts as a bridge which links NOS2 with the ECS E3 ubiquitin ligase complex components ELOC and CUL5. The sequence is that of SPRY domain-containing SOCS box protein 2 (Spsb2) from Rattus norvegicus (Rat).